Reading from the N-terminus, the 492-residue chain is 1-aminocyclopropane-1-carboxylate synthase 1 (492 aa).

An N6-(pyridoxal phosphate)lysine modification is found at lysine 277.

It belongs to the class-I pyridoxal-phosphate-dependent aminotransferase family. Homodimer. The cofactor is pyridoxal 5'-phosphate.

The catalysed reaction is S-adenosyl-L-methionine = 1-aminocyclopropane-1-carboxylate + S-methyl-5'-thioadenosine + H(+). It functions in the pathway alkene biosynthesis; ethylene biosynthesis via S-adenosyl-L-methionine; ethylene from S-adenosyl-L-methionine: step 1/2. Its function is as follows. Catalyzes the formation of 1-aminocyclopropane-1-carboxylate, a direct precursor of ethylene in higher plants. The polypeptide is 1-aminocyclopropane-1-carboxylate synthase 1 (ACS1) (Prunus mume (Japanese apricot)).